A 475-amino-acid chain; its full sequence is Putative response regulator NtrX-like (475 aa).

One can recognise a Response regulatory domain in the interval 5 to 121 (DVLIVDDEES…KLVILLKRAC (117 aa)). 4-aspartylphosphate is present on Asp54. Residues 143–369 (LVGGCSVTLK…LRNVVEWTLI (227 aa)) enclose the Sigma-54 factor interaction domain. ATP contacts are provided by residues 171–178 (GKVGSGKE) and 232–241 (ANNGTLYIDE).

In terms of biological role, member of the two-component regulatory system RF_0895/RF_0427. The protein is Putative response regulator NtrX-like of Rickettsia felis (strain ATCC VR-1525 / URRWXCal2) (Rickettsia azadi).